We begin with the raw amino-acid sequence, 256 residues long: Protein RKD4 (256 aa).

One can recognise an RWP-RK domain in the interval Glu130–Glu216. Residues Arg190–Glu224 are a coiled coil.

The protein resides in the nucleus. In terms of biological role, putative transcription factor. This is Protein RKD4 (RKD4) from Arabidopsis thaliana (Mouse-ear cress).